Here is a 326-residue protein sequence, read N- to C-terminus: tRNA-modifying protein YgfZ (326 aa).

The folate site is built by tryptophan 27 and tryptophan 189.

This sequence belongs to the tRNA-modifying YgfZ family.

Its subcellular location is the cytoplasm. In terms of biological role, folate-binding protein involved in regulating the level of ATP-DnaA and in the modification of some tRNAs. It is probably a key factor in regulatory networks that act via tRNA modification, such as initiation of chromosomal replication. The polypeptide is tRNA-modifying protein YgfZ (Enterobacter sp. (strain 638)).